Consider the following 571-residue polypeptide: MRVSKYLLSTQKETPANAEVISHQLMLRAGMIRRNASGLYSYLPTGLRVLRKVEAIVREEMNKAGAIEILMPMVQPADLWVETGRWEKFGPELLRFKDRHNRDFVLGPTHEEVITDLIRKEVSSYKQLPLNLYQIQTKFRDEVRPRFGMMRSREFLMKDAYSFHLDVDTMNETYEAMYNAYSNILTRMGLAFRPVLADTGSIGGSMSHEFHVLAQSGEDLIAYSTGSDYAANIEKAESPVPTEPRGAATEELRLVDTPNAKTIAELVEQFDLDITKTVKTLIVVGASEATPLVALIVRGDHELNEVKADKLDLVASPVEMAPEALIRDAIGAGPGSLGPIGLNIPIVIDHSVSVMSDFAAGANVDDKHYFGINWERDLPTAQVADIRNVVEGEPTPDGSGTYAMARGIEVGHIFQLGTNYSKSMNATVLDENGKSQVLLMGCYGVGVSRIVAAAIEQNFDDRGIIWPEAIAPFSVGILPMNMHKSHRVTDIAEQLYKDLNEAGIDVLLDDRKERPGVMFADMELIGIPHTVVIGDRNIDAGVFEYKNRRTGEKQDIPFDQLLDLLKNAVKG.

The protein belongs to the class-II aminoacyl-tRNA synthetase family. ProS type 1 subfamily. Homodimer.

It localises to the cytoplasm. The enzyme catalyses tRNA(Pro) + L-proline + ATP = L-prolyl-tRNA(Pro) + AMP + diphosphate. In terms of biological role, catalyzes the attachment of proline to tRNA(Pro) in a two-step reaction: proline is first activated by ATP to form Pro-AMP and then transferred to the acceptor end of tRNA(Pro). As ProRS can inadvertently accommodate and process non-cognate amino acids such as alanine and cysteine, to avoid such errors it has two additional distinct editing activities against alanine. One activity is designated as 'pretransfer' editing and involves the tRNA(Pro)-independent hydrolysis of activated Ala-AMP. The other activity is designated 'posttransfer' editing and involves deacylation of mischarged Ala-tRNA(Pro). The misacylated Cys-tRNA(Pro) is not edited by ProRS. The polypeptide is Proline--tRNA ligase (Shewanella baltica (strain OS155 / ATCC BAA-1091)).